Reading from the N-terminus, the 126-residue chain is Large ribosomal subunit protein uL22 (126 aa).

The protein belongs to the universal ribosomal protein uL22 family. As to quaternary structure, part of the 50S ribosomal subunit.

This protein binds specifically to 23S rRNA; its binding is stimulated by other ribosomal proteins, e.g. L4, L17, and L20. It is important during the early stages of 50S assembly. It makes multiple contacts with different domains of the 23S rRNA in the assembled 50S subunit and ribosome. Functionally, the globular domain of the protein is located near the polypeptide exit tunnel on the outside of the subunit, while an extended beta-hairpin is found that lines the wall of the exit tunnel in the center of the 70S ribosome. This Maricaulis maris (strain MCS10) (Caulobacter maris) protein is Large ribosomal subunit protein uL22.